The following is an 85-amino-acid chain: Protein AC4 (85 aa).

Glycine 2 is lipidated: N-myristoyl glycine; by host. Residues 44-63 are disordered; sequence RAPMSNPTSRKTGTVSNGDC. Polar residues predominate over residues 46–62; the sequence is PMSNPTSRKTGTVSNGD.

This sequence belongs to the geminiviridae protein AC4/C4 family.

It is found in the host cell membrane. In terms of biological role, pathogenicity determinant. May act as a suppressor of RNA-mediated gene silencing, also known as post-transcriptional gene silencing (PTGS), a mechanism of plant viral defense that limits the accumulation of viral RNAs. In Potato yellow mosaic virus (isolate Venezuela) (PYMV), this protein is Protein AC4.